A 477-amino-acid chain; its full sequence is MVNTMKTKLLCVLLLCGAVFSLPRQETYRQLARGSRAYGVACKDEITQMTYRRQESWLRPEVRSKRVEHCQCDRGQARCHTVPVNSCSEPRCFNGGTCWQAVYFSDFVCQCPAGYTGKRCEVDTRATCYEGQGVTYRGTWSTAESRVECINWNSSLLTRRTYNGRMPDAFNLGLGNHNYCRNPNGAPKPWCYVIKAGKFTSESCSVPVCSKATCGLRKYKEPQLHSTGGLFTDITSHPWQAAIFAQNRRSSGERFLCGGILISSCWVLTAAHCFQESYLPDQLKVVLGRTYRVKPGEEEQTFKVKKYIVHKEFDDDTYNNDIALLQLKSDSPQCAQESDSVRAICLPEANLQLPDWTECELSGYGKHKSSSPFYSEQLKEGHVRLYPSSRCAPKFLFNKTVTNNMLCAGDTRSGEIYPNVHDACQGDSGGPLVCMNDNHMTLLGIISWGVGCGEKDVPGVYTKVTNYLGWIRDNMHL.

The signal sequence occupies residues 1–36 (MVNTMKTKLLCVLLLCGAVFSLPRQETYRQLARGSR). Positions 40–82 (VACKDEITQMTYRRQESWLRPEVRSKRVEHCQCDRGQARCHTV) constitute a Fibronectin type-I domain. Disulfide bonds link C42–C72, C70–C79, C87–C98, C92–C109, C111–C120, C128–C209, C149–C191, C180–C204, C214–C345, C257–C273, C265–C334, C359–C434, C391–C407, and C424–C452. The EGF-like domain occupies 83–121 (PVNSCSEPRCFNGGTCWQAVYFSDFVCQCPAGYTGKRCE). The Kringle domain maps to 128-209 (CYEGQGVTYR…TSESCSVPVC (82 aa)). N153 is a glycosylation site (N-linked (GlcNAc...) asparagine). The Peptidase S1 domain maps to 226 to 476 (STGGLFTDIT…YLGWIRDNMH (251 aa)). Catalysis depends on charge relay system residues H272 and D321. The N-linked (GlcNAc...) asparagine glycan is linked to N398. The active-site Charge relay system is S428.

Belongs to the peptidase S1 family. As to quaternary structure, monomer.

Its subcellular location is the secreted. The enzyme catalyses Specific cleavage of Arg-|-Val bond in plasminogen to form plasmin.. Its activity is regulated as follows. Activity toward plasminogen is stimulated in the presence of fibrin I. Its function is as follows. Probably essential to support the feeding habits of this exclusively haematophagous animal. Potent thrombolytic agent. This chain is Salivary plasminogen activator alpha 1, found in Desmodus rotundus (Vampire bat).